The primary structure comprises 99 residues: Protein translation factor SUI1 homolog (99 aa).

This sequence belongs to the SUI1 family.

This is Protein translation factor SUI1 homolog from Picrophilus torridus (strain ATCC 700027 / DSM 9790 / JCM 10055 / NBRC 100828 / KAW 2/3).